The following is a 291-amino-acid chain: ATP synthase gamma chain (291 aa).

Belongs to the ATPase gamma chain family. F-type ATPases have 2 components, CF(1) - the catalytic core - and CF(0) - the membrane proton channel. CF(1) has five subunits: alpha(3), beta(3), gamma(1), delta(1), epsilon(1). CF(0) has three main subunits: a, b and c.

Its subcellular location is the cell membrane. Produces ATP from ADP in the presence of a proton gradient across the membrane. The gamma chain is believed to be important in regulating ATPase activity and the flow of protons through the CF(0) complex. This Streptococcus pyogenes serotype M3 (strain ATCC BAA-595 / MGAS315) protein is ATP synthase gamma chain.